A 420-amino-acid polypeptide reads, in one-letter code: MSGEAPRVAVDPFACPMMTMQRKPEVHDAFREAGPVVEVNAPAGGPAWFITDDALSRYVLADPRLVKDPDLAPAAWRGVVDGLDIPVPELRPFTLIAVDGEAHRRLHRIHAPAFNPRRLAERTDRIAAIAGRLLTELADASGRSGEPAELIGGFAYHFPLLVICELLGVPVTVPMAREAVSVLKALASAAQSGGGDGTDPAGGVPDTSALESLLLEAVHSARRNDTPTMTRVLYEHTQAEFGSVSDNQLVYMITGIIFAGHERTGSFLGFLLAEVLAGRLAADADEDAVSRFVEEAVRYHPPVPYTLWRFAATEVTIGGVRLPPGAPVLVDIEGTNTDGRHHDAPHAFHPDRPSWRRLTFGDGPHYCIGEQLAQLESRTMIGVLRSRFPEARLAVPYDELRWCRNGAQTARLTELPVWLR.

Cys367 contributes to the heme binding site.

This sequence belongs to the cytochrome P450 family. As to quaternary structure, monomer. Heme is required as a cofactor.

It localises to the cytoplasm. It catalyses the reaction 13-deoxydaunorubicin + NADPH + O2 + H(+) = 13-dihydrodaunorubicin + NADP(+) + H2O. The enzyme catalyses 13-dihydrodaunorubicin + NADPH + O2 + H(+) = daunorubicin + NADP(+) + 2 H2O. It carries out the reaction 13-deoxycarminomycin + NADPH + O2 + H(+) = 13-dihydrocarminomycin + NADP(+) + H2O. The catalysed reaction is 13-dihydrocarminomycin + NADPH + O2 + H(+) = carminomycin + NADP(+) + 2 H2O. It catalyses the reaction daunorubicin + NADPH + O2 + H(+) = doxorubicin + NADP(+) + H2O. Its pathway is antibiotic biosynthesis; daunorubicin biosynthesis. The protein operates within antibiotic biosynthesis; carminomycin biosynthesis. It participates in antibiotic biosynthesis; doxorubicin biosynthesis. In terms of biological role, involved in the biosynthesis of the anthracyclines carminomycin, daunorubicin (daunomycin) and doxorubicin (adriamycin) which are aromatic polyketide antibiotics that exhibit high cytotoxicity and are widely applied in the chemotherapy of a variety of cancers. In vivo, DoxA catalyzes the C-13 hydroxylation of 13-deoxycarminomycin and 13-deoxydaunorubicin to yield 13-dihydrocarminomycin and 13-dihydrodaunorubicin, respectively, as well as the oxidation of these 13-dihydro-anthracyclines to their respective 13-keto forms, carminomycin and daunorubicin. In vivo, it also catalyzes the C-14 hydroxylation of daunorubicin to form doxorubicin. It can only use NADP. DoxA acts jointly with DnrV. The protein is Cytochrome P-450 monooxygenase DoxA (doxA) of Streptomyces peucetius subsp. caesius.